A 453-amino-acid chain; its full sequence is uncharacterized protein (453 aa).

2 disordered regions span residues 15–42 (LKRKQPSTSFNGKRKRTSSGLIEKSETM) and 425–453 (TNEISSSNNSGTAKNKNNQNRKRNRRHAK). Residues 425–437 (TNEISSSNNSGTA) are compositionally biased toward polar residues. Positions 443-453 (QNRKRNRRHAK) are enriched in basic residues.

This is an uncharacterized protein from Caenorhabditis elegans.